Consider the following 640-residue polypeptide: DNA gyrase subunit B (640 aa).

The 115-residue stretch at 423–537 (AELYIVEGDS…NGNIYIAQPP (115 aa)) folds into the Toprim domain. The Mg(2+) site is built by Glu-429, Asp-502, and Asp-504.

It belongs to the type II topoisomerase GyrB family. Heterotetramer, composed of two GyrA and two GyrB chains. In the heterotetramer, GyrA contains the active site tyrosine that forms a transient covalent intermediate with DNA, while GyrB binds cofactors and catalyzes ATP hydrolysis. Mg(2+) serves as cofactor. Requires Mn(2+) as cofactor. It depends on Ca(2+) as a cofactor.

It is found in the cytoplasm. It catalyses the reaction ATP-dependent breakage, passage and rejoining of double-stranded DNA.. A type II topoisomerase that negatively supercoils closed circular double-stranded (ds) DNA in an ATP-dependent manner to modulate DNA topology and maintain chromosomes in an underwound state. Negative supercoiling favors strand separation, and DNA replication, transcription, recombination and repair, all of which involve strand separation. Also able to catalyze the interconversion of other topological isomers of dsDNA rings, including catenanes and knotted rings. Type II topoisomerases break and join 2 DNA strands simultaneously in an ATP-dependent manner. This Spiroplasma citri protein is DNA gyrase subunit B.